Here is a 391-residue protein sequence, read N- to C-terminus: GATA-binding factor 6-A (391 aa).

A disordered region spans residues 57-111 (GAHSVNSHWSQATSESSSFNNSSPHTSSRYHYPPSPPMHNGSTRDTGYSSSLTVS). Positions 66-83 (SQATSESSSFNNSSPHTS) are enriched in low complexity. A compositionally biased stretch (polar residues) spans 96-111 (NGSTRDTGYSSSLTVS). GATA-type zinc fingers lie at residues 182 to 206 (CVNC…CNAC) and 236 to 260 (CANC…CNAC). Residues 274–355 (AMKKEGIQTR…TESTSPNSNT (82 aa)) are disordered. Residues 282–291 (TRKRKPKTLN) show a composition bias toward basic residues. Residues 292–319 (KSKSSSSNGNSSHQISMTPTSTTSSTNS) are compositionally biased toward low complexity. A compositionally biased stretch (polar residues) spans 326–355 (GSPSQNTTPVVASSLMSTQQTESTSPNSNT).

As to expression, in embryos, expressed in the presumptive heart mesoderm. In adults, expressed at high levels in heart, small intestine, and stomach and at lower levels in lung, pancreas and colon.

The protein localises to the nucleus. Transcriptional activator that binds 5'-GATA-3'-containing motifs within gene promoters. Regulates cardiac-specific transcription during embryogenesis and thereby cardiogenesis. The protein is GATA-binding factor 6-A (gata6-a) of Xenopus laevis (African clawed frog).